The sequence spans 682 residues: Potassium-transporting ATPase ATP-binding subunit (682 aa).

Transmembrane regions (helical) follow at residues 34-54 (PVMF…LAMV), 58-78 (IAGS…TVLF), 219-239 (IALT…TATL), and 254-274 (VLVA…LSAI). The 4-aspartylphosphate intermediate role is filled by Asp307. Residues Asp344, Glu348, 377 to 384 (FTAQSRMS), and Lys395 contribute to the ATP site. Positions 518 and 522 each coordinate Mg(2+). 3 consecutive transmembrane segments (helical) span residues 588-608 (FAII…LNVM), 616-636 (AILS…PLAL), and 662-682 (LVVP…LGLA).

It belongs to the cation transport ATPase (P-type) (TC 3.A.3) family. Type IA subfamily. In terms of assembly, the system is composed of three essential subunits: KdpA, KdpB and KdpC.

The protein localises to the cell inner membrane. It catalyses the reaction K(+)(out) + ATP + H2O = K(+)(in) + ADP + phosphate + H(+). Functionally, part of the high-affinity ATP-driven potassium transport (or Kdp) system, which catalyzes the hydrolysis of ATP coupled with the electrogenic transport of potassium into the cytoplasm. This subunit is responsible for energy coupling to the transport system and for the release of the potassium ions to the cytoplasm. The chain is Potassium-transporting ATPase ATP-binding subunit from Salmonella newport (strain SL254).